A 503-amino-acid chain; its full sequence is MEFSVKSGSPEKQRSACIVVGVFEPRRLSPIAEQLDKISDGYISALLRRGELEGKVGQTLLLHHVPNILSERILLIGCGKERELDERQYKQVIQKTINTLNDTGSMEAVCFLTELHVKGRNTYWKVRQAVETAKETLYTFDQLKSNKTEPRRPLRKMVFNVPTRRELTSGERAIQHGLAVASGIKAAKDLGNMPPNICNAAYLASQARQLADAFSTNIITRVIGEQQMKELGMHSYLAVGHGSQNESLMSVIEYKGNPNPDAKPIVLVGKGLTFDSGGISIKPAEGMDEMKYDMCGAATVYGVMRVVAELQLPLNVIGVLAGCENMPGGRAYRPGDILTTMSGQTVEVLNTDAEGRLVLCDALTYVERFEPEVVIDIATLTGACVVALGHHITGLMSNHNPLAHELIGASEQAGDRAWRLPLGDEFYEQLDSNFADMANIGGRAGGAITAGCFLSRFTRKYSWAHLDIAGTAWRSGKNKGATGRPVALLSQFLLNRAGLNGDD.

The Mn(2+) site is built by Lys270 and Asp275. Residue Lys282 is part of the active site. Residues Asp293, Asp352, and Glu354 each coordinate Mn(2+). Residue Arg356 is part of the active site.

This sequence belongs to the peptidase M17 family. Requires Mn(2+) as cofactor.

Its subcellular location is the cytoplasm. The catalysed reaction is Release of an N-terminal amino acid, Xaa-|-Yaa-, in which Xaa is preferably Leu, but may be other amino acids including Pro although not Arg or Lys, and Yaa may be Pro. Amino acid amides and methyl esters are also readily hydrolyzed, but rates on arylamides are exceedingly low.. The enzyme catalyses Release of an N-terminal amino acid, preferentially leucine, but not glutamic or aspartic acids.. Presumably involved in the processing and regular turnover of intracellular proteins. Catalyzes the removal of unsubstituted N-terminal amino acids from various peptides. In Yersinia enterocolitica serotype O:8 / biotype 1B (strain NCTC 13174 / 8081), this protein is Probable cytosol aminopeptidase.